The sequence spans 190 residues: Protein GrpE (190 aa).

Residues 1–42 form a disordered region; sequence MNEKDNQTTSEPENEQEIIDVNDSGEQPEENETEQPQEEAVE. Residues 26–42 are compositionally biased toward acidic residues; the sequence is EQPEENETEQPQEEAVE.

Belongs to the GrpE family. Homodimer.

The protein resides in the cytoplasm. Functionally, participates actively in the response to hyperosmotic and heat shock by preventing the aggregation of stress-denatured proteins, in association with DnaK and GrpE. It is the nucleotide exchange factor for DnaK and may function as a thermosensor. Unfolded proteins bind initially to DnaJ; upon interaction with the DnaJ-bound protein, DnaK hydrolyzes its bound ATP, resulting in the formation of a stable complex. GrpE releases ADP from DnaK; ATP binding to DnaK triggers the release of the substrate protein, thus completing the reaction cycle. Several rounds of ATP-dependent interactions between DnaJ, DnaK and GrpE are required for fully efficient folding. The protein is Protein GrpE of Oceanobacillus iheyensis (strain DSM 14371 / CIP 107618 / JCM 11309 / KCTC 3954 / HTE831).